The following is a 234-amino-acid chain: MAKLTKRMRVIRDKVDVTKQYDINEAVALLKELATAKFVESVDVAVNLGIDARKSDQNVRGATVLPHGTGRSVRVAVFTQGANAEAAKAAGAEFVGMEDLAEQIKKGEMGFDVVIASPDAMRVVGQLGQVLGPRGLMPNPKVGTVTPNVAEAVNNAKAGQVRYRNDKNGIIHTTIGKVDFDSNKLKENLEALLVALKKAKPSQAKGVYIKKVSLSTTMGAGVAVDQSGLNAAAN.

The protein belongs to the universal ribosomal protein uL1 family. In terms of assembly, part of the 50S ribosomal subunit.

Its function is as follows. Binds directly to 23S rRNA. The L1 stalk is quite mobile in the ribosome, and is involved in E site tRNA release. Functionally, protein L1 is also a translational repressor protein, it controls the translation of the L11 operon by binding to its mRNA. In Pectobacterium carotovorum subsp. carotovorum (strain PC1), this protein is Large ribosomal subunit protein uL1.